Consider the following 155-residue polypeptide: Small ribosomal subunit protein uS7 (155 aa).

It belongs to the universal ribosomal protein uS7 family. Part of the 30S ribosomal subunit. Contacts proteins S9 and S11.

Functionally, one of the primary rRNA binding proteins, it binds directly to 16S rRNA where it nucleates assembly of the head domain of the 30S subunit. Is located at the subunit interface close to the decoding center, probably blocks exit of the E-site tRNA. This chain is Small ribosomal subunit protein uS7, found in Mycoplasma pneumoniae (strain ATCC 29342 / M129 / Subtype 1) (Mycoplasmoides pneumoniae).